Reading from the N-terminus, the 61-residue chain is Large ribosomal subunit protein uL30 (61 aa).

It belongs to the universal ribosomal protein uL30 family. In terms of assembly, part of the 50S ribosomal subunit.

The chain is Large ribosomal subunit protein uL30 from Lacticaseibacillus casei (strain BL23) (Lactobacillus casei).